A 436-amino-acid polypeptide reads, in one-letter code: Cyclin-dependent kinase 11B (436 aa).

The short motif at 25–30 is the Nuclear localization signal element; that stretch reads VKKNRK. The tract at residues 30-44 is calmodulin-binding; sequence KKLVKGLHRAGPPPE. One can recognise a Protein kinase domain in the interval 79-364; sequence FQCLNRIEEG…AEDGLKHEYF (286 aa). Residues 85–93 and lysine 108 contribute to the ATP site; that span reads IEEGTYGVV. Serine 123 carries the phosphoserine; by CDK7 modification. Threonine 129 carries the post-translational modification Phosphothreonine; by CDK7. Aspartate 203 acts as the Proton acceptor in catalysis. At serine 230 the chain carries Phosphoserine. At tyrosine 235 the chain carries Phosphotyrosine. Threonine 236 carries the phosphothreonine modification. Lysine 282 participates in a covalent cross-link: Glycyl lysine isopeptide (Lys-Gly) (interchain with G-Cter in SUMO2). Residues 383-406 are disordered; that stretch reads SEQQCVKRGTSPKPPEGGLGYSQL. A Phosphothreonine modification is found at threonine 392. Serine 393 is subject to Phosphoserine.

Belongs to the protein kinase superfamily. CMGC Ser/Thr protein kinase family. CDC2/CDKX subfamily. In terms of assembly, may interact PAK1 and RANBP9. p110C interacts with RNPS1. Interacts with CCND3. Interacts with CCNL1 and CCNL2. Forms complexes with pre-mRNA-splicing factors, including at least SRSF1, SRSF2 AND SRSF7/SLU7. Requires Mg(2+) as cofactor.

The protein resides in the cytoplasm. It is found in the nucleus membrane. The protein localises to the endomembrane system. It localises to the perinuclear region. The enzyme catalyses L-seryl-[protein] + ATP = O-phospho-L-seryl-[protein] + ADP + H(+). The catalysed reaction is L-threonyl-[protein] + ATP = O-phospho-L-threonyl-[protein] + ADP + H(+). Functionally, plays multiple roles in cell cycle progression, cytokinesis and apoptosis. Involved in pre-mRNA splicing in a kinase activity-dependent manner. May act as a negative regulator of normal cell cycle progression. The protein is Cyclin-dependent kinase 11B (Cdk11b) of Rattus norvegicus (Rat).